A 109-amino-acid polypeptide reads, in one-letter code: Phosphoribosyl-ATP pyrophosphatase (109 aa).

This sequence belongs to the PRA-PH family.

The protein resides in the cytoplasm. The enzyme catalyses 1-(5-phospho-beta-D-ribosyl)-ATP + H2O = 1-(5-phospho-beta-D-ribosyl)-5'-AMP + diphosphate + H(+). Its pathway is amino-acid biosynthesis; L-histidine biosynthesis; L-histidine from 5-phospho-alpha-D-ribose 1-diphosphate: step 2/9. In Alkalilimnicola ehrlichii (strain ATCC BAA-1101 / DSM 17681 / MLHE-1), this protein is Phosphoribosyl-ATP pyrophosphatase.